The sequence spans 296 residues: 33 kDa chaperonin (296 aa).

2 cysteine pairs are disulfide-bonded: Cys-238-Cys-240 and Cys-271-Cys-274.

The protein belongs to the HSP33 family. In terms of processing, under oxidizing conditions two disulfide bonds are formed involving the reactive cysteines. Under reducing conditions zinc is bound to the reactive cysteines and the protein is inactive.

Its subcellular location is the cytoplasm. Redox regulated molecular chaperone. Protects both thermally unfolding and oxidatively damaged proteins from irreversible aggregation. Plays an important role in the bacterial defense system toward oxidative stress. The chain is 33 kDa chaperonin from Clostridium botulinum (strain Okra / Type B1).